The sequence spans 163 residues: RNA pyrophosphohydrolase (163 aa).

One can recognise a Nudix hydrolase domain in the interval 6–149 (GYRLNVGIVI…KRDVYRQVMK (144 aa)). The Nudix box signature appears at 38 to 59 (GGIHLTESPEEAMYRELFEELG).

This sequence belongs to the Nudix hydrolase family. RppH subfamily. Requires a divalent metal cation as cofactor.

Its function is as follows. Accelerates the degradation of transcripts by removing pyrophosphate from the 5'-end of triphosphorylated RNA, leading to a more labile monophosphorylated state that can stimulate subsequent ribonuclease cleavage. The protein is RNA pyrophosphohydrolase of Hamiltonella defensa subsp. Acyrthosiphon pisum (strain 5AT).